Here is a 602-residue protein sequence, read N- to C-terminus: Glutaminase liver isoform, mitochondrial (602 aa).

The transit peptide at 1-14 (MRSMRALQNALSRA) directs the protein to the mitochondrion. Disordered stretches follow at residues 1-29 (MRSM…PSRG) and 45-66 (AQGR…ASHS). Residue serine 219 coordinates substrate. An N6-succinyllysine modification is found at lysine 253. Asparagine 268 is a binding site for substrate. Lysine 279 and lysine 284 each carry N6-acetyllysine. Residues glutamate 314 and asparagine 321 each contribute to the substrate site. Lysine 329 carries the N6-acetyllysine modification. Positions 347, 399, and 417 each coordinate substrate. ANK repeat units follow at residues 518–551 (DSRT…VKDR) and 552–585 (WGNI…SETQ).

This sequence belongs to the glutaminase family. Homotetramer, dimer of dimers. Does not assemble into higher oligomers. Interacts with the PDZ domain of the syntrophin SNTA1. Interacts with the PDZ domain of TAX1BP3.

The protein localises to the mitochondrion. It carries out the reaction L-glutamine + H2O = L-glutamate + NH4(+). Enzyme activity is not stimulated by phosphate. Phosphate increases kcat, but decreases substrate affinity, resulting in unchanged enzyme activity. Its function is as follows. Plays an important role in the regulation of glutamine catabolism. Promotes mitochondrial respiration and increases ATP generation in cells by catalyzing the synthesis of glutamate and alpha-ketoglutarate. Increases cellular anti-oxidant function via NADH and glutathione production. May play a role in preventing tumor proliferation. The sequence is that of Glutaminase liver isoform, mitochondrial (Gls2) from Mus musculus (Mouse).